A 596-amino-acid polypeptide reads, in one-letter code: Elongation factor 4 (596 aa).

Residues 2–184 (KHIRNFSIIA…VIVDQIPPPE (183 aa)) form the tr-type G domain. GTP is bound by residues 14-19 (DHGKST) and 131-134 (NKID).

Belongs to the TRAFAC class translation factor GTPase superfamily. Classic translation factor GTPase family. LepA subfamily.

The protein localises to the cell inner membrane. The enzyme catalyses GTP + H2O = GDP + phosphate + H(+). Its function is as follows. Required for accurate and efficient protein synthesis under certain stress conditions. May act as a fidelity factor of the translation reaction, by catalyzing a one-codon backward translocation of tRNAs on improperly translocated ribosomes. Back-translocation proceeds from a post-translocation (POST) complex to a pre-translocation (PRE) complex, thus giving elongation factor G a second chance to translocate the tRNAs correctly. Binds to ribosomes in a GTP-dependent manner. The protein is Elongation factor 4 of Shewanella sp. (strain ANA-3).